The primary structure comprises 162 residues: uncharacterized protein (162 aa).

The N-terminal stretch at 1 to 19 (MARVYILFFSVFFVFPLFS) is a signal peptide. 2 consecutive transmembrane segments (helical) span residues 53 to 75 (LSIGAFPIVTLLSFITYDIIRLI) and 105 to 127 (IVFGVAVGISVTIGLIDVTYRAV).

Its subcellular location is the cell membrane. This is an uncharacterized protein from Treponema pallidum (strain Nichols).